The sequence spans 179 residues: Inosine/xanthosine triphosphatase (179 aa).

Glu71 is a Mg(2+) binding site. Residue 71-72 coordinates substrate; the sequence is EA.

It belongs to the YjjX NTPase family. In terms of assembly, homodimer. Mg(2+) is required as a cofactor. Mn(2+) serves as cofactor.

The enzyme catalyses XTP + H2O = XDP + phosphate + H(+). It catalyses the reaction ITP + H2O = IDP + phosphate + H(+). In terms of biological role, phosphatase that hydrolyzes non-canonical purine nucleotides such as XTP and ITP to their respective diphosphate derivatives. Probably excludes non-canonical purines from DNA/RNA precursor pool, thus preventing their incorporation into DNA/RNA and avoiding chromosomal lesions. The protein is Inosine/xanthosine triphosphatase of Shewanella sp. (strain MR-4).